The primary structure comprises 546 residues: RuBisCO large subunit-binding protein subunit alpha, chloroplastic (546 aa).

The transit peptide at 1 to 6 directs the protein to the chloroplast; that stretch reads RFSVRA. Residue serine 50 is modified to Phosphoserine.

Belongs to the chaperonin (HSP60) family. Oligomer of probably six alpha and six beta subunits.

It is found in the plastid. Its subcellular location is the chloroplast. Functionally, this protein binds RuBisCO small and large subunits and is implicated in the assembly of the enzyme oligomer. The protein is RuBisCO large subunit-binding protein subunit alpha, chloroplastic of Brassica napus (Rape).